Reading from the N-terminus, the 741-residue chain is Polyribonucleotide nucleotidyltransferase (741 aa).

Mg(2+) is bound by residues Asp-489 and Asp-495. A KH domain is found at 556-615; sequence PKIDSIQIPVDKIKVVIGKGGETIDKIIAETGVTIDIDEEGLVQIFSSDQDAIDRAKTII. The region spanning 625 to 693 is the S1 motif domain; that stretch reads GEVYTVPVVR…EKGRVDASIK (69 aa). The interval 695 to 741 is disordered; it reads LLPKPEKNEDGENGEEHRHCCCSHHKPDHHNESVEAPKKSDESETKE. 2 stretches are compositionally biased toward basic and acidic residues: residues 698-713 and 723-741; these read KPEK…EHRH and HHNE…ETKE.

This sequence belongs to the polyribonucleotide nucleotidyltransferase family. Mg(2+) serves as cofactor.

It localises to the cytoplasm. It carries out the reaction RNA(n+1) + phosphate = RNA(n) + a ribonucleoside 5'-diphosphate. Functionally, involved in mRNA degradation. Catalyzes the phosphorolysis of single-stranded polyribonucleotides processively in the 3'- to 5'-direction. The protein is Polyribonucleotide nucleotidyltransferase of Streptococcus thermophilus (strain CNRZ 1066).